A 515-amino-acid polypeptide reads, in one-letter code: Bifunctional purine biosynthesis protein PurH (515 aa).

The region spanning methionine 1 to valine 145 is the MGS-like domain.

The protein belongs to the PurH family.

The enzyme catalyses (6R)-10-formyltetrahydrofolate + 5-amino-1-(5-phospho-beta-D-ribosyl)imidazole-4-carboxamide = 5-formamido-1-(5-phospho-D-ribosyl)imidazole-4-carboxamide + (6S)-5,6,7,8-tetrahydrofolate. The catalysed reaction is IMP + H2O = 5-formamido-1-(5-phospho-D-ribosyl)imidazole-4-carboxamide. It participates in purine metabolism; IMP biosynthesis via de novo pathway; 5-formamido-1-(5-phospho-D-ribosyl)imidazole-4-carboxamide from 5-amino-1-(5-phospho-D-ribosyl)imidazole-4-carboxamide (10-formyl THF route): step 1/1. Its pathway is purine metabolism; IMP biosynthesis via de novo pathway; IMP from 5-formamido-1-(5-phospho-D-ribosyl)imidazole-4-carboxamide: step 1/1. In Streptococcus uberis (strain ATCC BAA-854 / 0140J), this protein is Bifunctional purine biosynthesis protein PurH.